Reading from the N-terminus, the 66-residue chain is Regulator of G-protein signaling 11 (66 aa).

The region spanning 1 to 66 (EACEELRFGG…DAAQLHIYML (66 aa)) is the RGS domain.

As to quaternary structure, heterodimer with Gbeta5. Interacts with RGS7BP, leading to regulate the subcellular location of the heterodimer formed with Gbeta5.

Its function is as follows. Inhibits signal transduction by increasing the GTPase activity of G protein alpha subunits thereby driving them into their inactive GDP-bound form. The sequence is that of Regulator of G-protein signaling 11 (Rgs11) from Rattus norvegicus (Rat).